The sequence spans 263 residues: Ribosomal RNA large subunit methyltransferase E (263 aa).

Positions 48, 50, 68, 88, and 118 each coordinate S-adenosyl-L-methionine. Catalysis depends on lysine 158, which acts as the Proton acceptor. Residues 205-263 (PVREGDIVEATIEDIGEEGDGIAKVENFTVFVSGVEDGETVEVRIDDVKPRYAFAEPVE) enclose the TRAM domain.

It belongs to the class I-like SAM-binding methyltransferase superfamily. RNA methyltransferase RlmE family.

The protein resides in the cytoplasm. The catalysed reaction is uridine(2552) in 23S rRNA + S-adenosyl-L-methionine = 2'-O-methyluridine(2552) in 23S rRNA + S-adenosyl-L-homocysteine + H(+). Specifically methylates the uridine in position 2552 of 23S rRNA at the 2'-O position of the ribose in the fully assembled 50S ribosomal subunit. The polypeptide is Ribosomal RNA large subunit methyltransferase E (Haloarcula marismortui (strain ATCC 43049 / DSM 3752 / JCM 8966 / VKM B-1809) (Halobacterium marismortui)).